A 148-amino-acid chain; its full sequence is Large ribosomal subunit protein uL11 (148 aa).

The disordered stretch occupies residues Glu-89–Thr-108.

It belongs to the universal ribosomal protein uL11 family. As to quaternary structure, part of the ribosomal stalk of the 50S ribosomal subunit. Interacts with L10 and the large rRNA to form the base of the stalk. L10 forms an elongated spine to which L12 dimers bind in a sequential fashion forming a multimeric L10(L12)X complex. Post-translationally, one or more lysine residues are methylated.

Functionally, forms part of the ribosomal stalk which helps the ribosome interact with GTP-bound translation factors. The chain is Large ribosomal subunit protein uL11 from Anaeromyxobacter dehalogenans (strain 2CP-1 / ATCC BAA-258).